We begin with the raw amino-acid sequence, 637 residues long: Biosynthetic arginine decarboxylase (637 aa).

N6-(pyridoxal phosphate)lysine is present on K101. Position 286–296 (F286–Y296) interacts with substrate.

It belongs to the Orn/Lys/Arg decarboxylase class-II family. SpeA subfamily. Mg(2+) is required as a cofactor. The cofactor is pyridoxal 5'-phosphate.

The catalysed reaction is L-arginine + H(+) = agmatine + CO2. It functions in the pathway amine and polyamine biosynthesis; agmatine biosynthesis; agmatine from L-arginine: step 1/1. In terms of biological role, catalyzes the biosynthesis of agmatine from arginine. The polypeptide is Biosynthetic arginine decarboxylase (Shewanella loihica (strain ATCC BAA-1088 / PV-4)).